A 414-amino-acid chain; its full sequence is Tar DNA-binding protein homolog 1 (414 aa).

Composition is skewed to basic and acidic residues over residues 1-44 and 153-167; these read MADE…KTTD and DDGRDGRSGRKRAVE. Disordered regions lie at residues 1–58 and 132–167; these read MADE…GDEP and SSADATSAKRRKVGSSDDSDSDDGRDGRSGRKRAVE. 2 RRM domains span residues 173–259 and 262–341; these read VDLI…QGRP and SRIF…IAQP. Residues 343-414 form a disordered region; that stretch reads EENNQSVGPD…APGDSRGPGW (72 aa). A compositionally biased stretch (basic and acidic residues) spans 361 to 373; the sequence is NRRERDRPDRRPI.

In terms of assembly, interacts with chromobox protein homolog hpl-2; interaction may maintain localization of hpl-2 to gene bodies. In terms of tissue distribution, widely expressed in a range of tissues including body wall muscles, pharynx and neurons of the midbody in adults and larvae.

It localises to the nucleus. Its subcellular location is the cytoplasm. In terms of biological role, RNA-binding protein which regulates transcription, splicing and RNA-editing. Limits the accumulation of double-stranded RNA by maintaining the abundance of the mature RNA transcripts that are formed from double-stranded precursor RNAs. Stress response protein that acts downstream of daf-16 in the insulin/IGF pathway to regulate longevity and the cellular stress response to osmotic, oxidative, proteotoxic and endoplasmic reticulum stress. Involved in the regulation of physiological processes including aging, fertility, growth and locomotion. Plays a role in maintaining localization of chromobox protein homolog hpl-2 to gene bodies, perhaps acting via binding to nascent RNA transcripts. The protein is Tar DNA-binding protein homolog 1 of Caenorhabditis elegans.